The primary structure comprises 203 residues: Phosphatidylethanolamine N-methyltransferase (203 aa).

The catalysed reaction is a 1,2-diacyl-sn-glycero-3-phosphoethanolamine + S-adenosyl-L-methionine = a 1,2-diacyl-sn-glycero-3-phospho-N-methylethanolamine + S-adenosyl-L-homocysteine + H(+). Its pathway is phospholipid metabolism; phosphatidylcholine biosynthesis. Its function is as follows. This enzyme catalyzes three distinct methylation reactions for converting phosphatidylethanolamine to phosphatidylcholine. The polypeptide is Phosphatidylethanolamine N-methyltransferase (pmtA) (Cereibacter sphaeroides (Rhodobacter sphaeroides)).